Consider the following 314-residue polypeptide: Mitotic checkpoint protein BUB3.3 (314 aa).

WD repeat units lie at residues 11–50 (PIEDAVSRLRFSPQSNNLLVASWDSYLRLYDVESSSLSLE), 52–90 (NSQAALLDCCFENESTSFTSGSDGFIRRYDLNAGTVDTI), 92–131 (RHDDISTSIVYSYEKGEVISTGFDEKIKFWDTRQRESLVF), 134–173 (DAGGAVGCVTVSGNNLVVCVDASMHIYDLRNLDEAFQSYA), 176–215 (VEVPIRCITSVPYSRGYAVGSVDGRVAVDFPNTSCSSEIK), 229–269 (LDGV…RLNE), and 272–311 (RYSNSIASLAFDHTGELLAIASSHTYQDAKEKEEAPQVFI).

This sequence belongs to the WD repeat BUB3 family. Part of the mitotic checkpoint complex (MCC).

It is found in the nucleus. Its subcellular location is the chromosome. The protein localises to the centromere. It localises to the kinetochore. The protein resides in the cytoplasm. It is found in the cytoskeleton. Its subcellular location is the phragmoplast. The protein localises to the spindle. In terms of biological role, has a dual function in spindle-assembly checkpoint signaling and in promoting the establishment of correct kinetochore-microtubule (K-MT) attachments. Promotes the formation of stable end-on bipolar attachments. Necessary for kinetochore localization of BUB1. The BUB1/BUB3 complex plays a role in the inhibition of anaphase-promoting complex or cyclosome (APC/C) when spindle-assembly checkpoint is activated and inhibits the ubiquitin ligase activity of APC/C by phosphorylating its activator CDC20. The sequence is that of Mitotic checkpoint protein BUB3.3 (BUB3.3) from Arabidopsis thaliana (Mouse-ear cress).